The chain runs to 516 residues: DNA-(apurinic or apyrimidinic site) endonuclease 2 (516 aa).

Positions 8 and 47 each coordinate Mg(2+). The active site involves Tyr-155. The Mg(2+) site is built by Asp-196, Asn-198, Asp-302, and His-303. The active-site Proton donor/acceptor is the Asp-196. His-303 functions as the Proton acceptor in the catalytic mechanism. A compositionally biased stretch (polar residues) spans 357 to 366 (QPSHQIQAQR). The tract at residues 357–389 (QPSHQIQAQRQPRKACMHSTRLRKSQGGPKRKQ) is disordered. Residues 367–389 (QPRKACMHSTRLRKSQGGPKRKQ) are compositionally biased toward basic residues. Lys-370 participates in a covalent cross-link: Glycyl lysine isopeptide (Lys-Gly) (interchain with G-Cter in ubiquitin). The interval 389–396 (QKNLMSYF) is required for the interaction and colocalization with PCNA in nuclear foci in presence of oxidative-induced DNA damaging agents. Positions 467, 470, 493, and 507 each coordinate Zn(2+). The GRF-type zinc finger occupies 467-516 (CGGHREPCVMRTVKKTGPNFGRQFYMCARPRGPPSDPSSRCNFFLWSRPS).

Belongs to the DNA repair enzymes AP/ExoA family. Interacts with PCNA. This interaction is increased by misincorporation of uracil in nuclear DNA. Mg(2+) serves as cofactor. Mn(2+) is required as a cofactor. Post-translationally, ubiquitinated by the CUL9-RBX1 complex. Ubiquitinated by MKRN3 at Lys-370 leading to proteasomal degradation. In terms of tissue distribution, expressed in lymphocytes, thymocytes and splenocytes (at protein level). Highly expressed in the thymus and weakly expressed in the bone marrow, spleen, eye, kidney, lung, brain and uterus.

It localises to the nucleus. The protein resides in the cytoplasm. Its subcellular location is the mitochondrion. It carries out the reaction Exonucleolytic cleavage in the 3'- to 5'-direction to yield nucleoside 5'-phosphates.. With respect to regulation, 3'-5' exonuclease activity is activated by sodium and manganese. 3'-5' exonuclease and 3'-phosphodiesterase activities are stimulated in presence of PCNA. In terms of biological role, functions as a weak apurinic/apyrimidinic (AP) endodeoxyribonuclease in the DNA base excision repair (BER) pathway of DNA lesions induced by oxidative and alkylating agents. Initiates repair of AP sites in DNA by catalyzing hydrolytic incision of the phosphodiester backbone immediately adjacent to the damage, generating a single-strand break with 5'-deoxyribose phosphate and 3'-hydroxyl ends. Also displays double-stranded DNA 3'-5' exonuclease, 3'-phosphodiesterase activities. Shows robust 3'-5' exonuclease activity on 3'-recessed heteroduplex DNA and is able to remove mismatched nucleotides preferentially. Shows fairly strong 3'-phosphodiesterase activity involved in the removal of 3'-damaged termini formed in DNA by oxidative agents. In the nucleus functions in the PCNA-dependent BER pathway. Plays a role in reversing blocked 3' DNA ends, problematic lesions that preclude DNA synthesis. Required for somatic hypermutation (SHM) and DNA cleavage step of class switch recombination (CSR) of immunoglobulin genes. Required for proper cell cycle progression during proliferation of peripheral lymphocytes. This chain is DNA-(apurinic or apyrimidinic site) endonuclease 2 (Apex2), found in Mus musculus (Mouse).